The sequence spans 198 residues: MSTAVQVDDVMRYRDSRFQTIAAKLLPTQYLVVDDDTALTTTLGSCVAACLRDPVLKIGGMNHFLLPEGQVGDGAPARYGSYAMELLINDMLKRGAHRKRIEAKVFGGANVLKGFTSNPVGTRNAEFVRQYLQAEHIPIIAEDLCGIHPRKVWFFPTTGRVVVQRLPHAHEAEVAAAESAVRARLSKAPVTGGVELFE.

The protein belongs to the CheD family.

The enzyme catalyses L-glutaminyl-[protein] + H2O = L-glutamyl-[protein] + NH4(+). Its function is as follows. Probably deamidates glutamine residues to glutamate on methyl-accepting chemotaxis receptors (MCPs), playing an important role in chemotaxis. The protein is Probable chemoreceptor glutamine deamidase CheD of Xanthomonas campestris pv. campestris (strain 8004).